Here is a 237-residue protein sequence, read N- to C-terminus: Demethylmenaquinone methyltransferase (237 aa).

S-adenosyl-L-methionine is bound by residues T58, D79, and 106–107 (NA).

The protein belongs to the class I-like SAM-binding methyltransferase superfamily. MenG/UbiE family.

The enzyme catalyses a 2-demethylmenaquinol + S-adenosyl-L-methionine = a menaquinol + S-adenosyl-L-homocysteine + H(+). The protein operates within quinol/quinone metabolism; menaquinone biosynthesis; menaquinol from 1,4-dihydroxy-2-naphthoate: step 2/2. In terms of biological role, methyltransferase required for the conversion of demethylmenaquinol (DMKH2) to menaquinol (MKH2). The chain is Demethylmenaquinone methyltransferase from Bacillus mycoides (strain KBAB4) (Bacillus weihenstephanensis).